A 444-amino-acid polypeptide reads, in one-letter code: Tubulin beta-2 chain (444 aa).

Positions 11, 69, 138, 142, 143, 144, 204, and 226 each coordinate GTP. Position 69 (Glu-69) interacts with Mg(2+).

Belongs to the tubulin family. As to quaternary structure, dimer of alpha and beta chains. A typical microtubule is a hollow water-filled tube with an outer diameter of 25 nm and an inner diameter of 15 nM. Alpha-beta heterodimers associate head-to-tail to form protofilaments running lengthwise along the microtubule wall with the beta-tubulin subunit facing the microtubule plus end conferring a structural polarity. Microtubules usually have 13 protofilaments but different protofilament numbers can be found in some organisms and specialized cells. The cofactor is Mg(2+).

The protein localises to the cytoplasm. It localises to the cytoskeleton. Its function is as follows. Tubulin is the major constituent of microtubules, a cylinder consisting of laterally associated linear protofilaments composed of alpha- and beta-tubulin heterodimers. Microtubules grow by the addition of GTP-tubulin dimers to the microtubule end, where a stabilizing cap forms. Below the cap, tubulin dimers are in GDP-bound state, owing to GTPase activity of alpha-tubulin. This chain is Tubulin beta-2 chain (TUBB2), found in Zea mays (Maize).